A 1403-amino-acid polypeptide reads, in one-letter code: Centrosomal protein of 162 kDa (1403 aa).

The disordered stretch occupies residues glutamate 19–threonine 44. A compositionally biased stretch (polar residues) spans glutamate 26 to proline 35. Serine 156 and serine 159 each carry phosphoserine. Disordered stretches follow at residues asparagine 171–glycine 235, aspartate 305–serine 342, and asparagine 449–serine 586. The span at glutamate 176–proline 189 shows a compositional bias: basic and acidic residues. Residues tyrosine 192–glutamate 204 are compositionally biased toward acidic residues. Positions leucine 206–glutamate 220 are enriched in basic and acidic residues. Residues asparagine 449–arginine 466 show a composition bias toward polar residues. The residue at position 468 (serine 468) is a Phosphoserine. Positions proline 481 to proline 496 are enriched in basic residues. Positions alanine 504–glutamine 517 are enriched in polar residues. 2 stretches are compositionally biased toward basic and acidic residues: residues leucine 522–lysine 532 and proline 567–aspartate 581. 3 coiled-coil regions span residues lysine 610 to arginine 1120, glutamate 1170 to serine 1205, and cysteine 1234 to glutamine 1385.

Belongs to the CEP162 family. Interacts with alpha-tubulin. Interacts with CPNE4. Interacts with CEP290.

It localises to the cytoplasm. It is found in the cytoskeleton. Its subcellular location is the microtubule organizing center. The protein resides in the centrosome. The protein localises to the centriole. It localises to the spindle. It is found in the nucleus. Functionally, required to promote assembly of the transition zone in primary cilia. Acts by specifically recognizing and binding the axonemal microtubule. Localizes to the distal ends of centrioles before ciliogenesis and directly binds to axonemal microtubule, thereby promoting and restricting transition zone formation specifically at the cilia base. Required to mediate CEP290 association with microtubules. The protein is Centrosomal protein of 162 kDa (Cep162) of Rattus norvegicus (Rat).